Consider the following 212-residue polypeptide: Ion-translocating oxidoreductase complex subunit G (212 aa).

A helical transmembrane segment spans residues 9–29 (GLLLGLFALLCTGLVAIVNQL). T176 bears the FMN phosphoryl threonine mark.

The protein belongs to the RnfG family. In terms of assembly, the complex is composed of six subunits: RnfA, RnfB, RnfC, RnfD, RnfE and RnfG. Requires FMN as cofactor.

It localises to the cell inner membrane. Functionally, part of a membrane-bound complex that couples electron transfer with translocation of ions across the membrane. This is Ion-translocating oxidoreductase complex subunit G from Shewanella piezotolerans (strain WP3 / JCM 13877).